The chain runs to 293 residues: Ubiquinone biosynthesis protein COQ9-B, mitochondrial (293 aa).

The tract at residues 21–73 is disordered; it reads LRSDDQKQPPFSSSSTHAETPEHAEEQYQQQQSPPRYTDQAGEESEDYESEEQ. The span at 29-38 shows a compositional bias: polar residues; the sequence is PPFSSSSTHA. Acidic residues predominate over residues 61 to 72; it reads AGEESEDYESEE. Arg219 is a binding site for a 1,2-diacylglycero-3-phosphoethanolamine.

It belongs to the COQ9 family. In terms of assembly, homodimer. Heterodimer; two heterodimers of COQ7:COQ9 come together on the same side of the lipid pseudo-bilayer and form a curved tetramer with a hydrophobic surface suitable for membrane interaction. These two tetramers assemble into a soluble octamer with a pseudo-bilayer of lipids captured within. Interacts with COQ7; this interaction allows ubiquinone (CoQ) isoprene intermediates presentation to COQ7 and facilitates the COQ7-mediated hydroxylase step.

It localises to the mitochondrion. Its pathway is cofactor biosynthesis; ubiquinone biosynthesis. Its function is as follows. Membrane-associated protein that warps the membrane surface to access and bind aromatic isoprenes with high specificity, including ubiquinone (CoQ) isoprene intermediates and presents them directly to COQ7, therefore facilitating the COQ7-mediated hydroxylase step. Participates in the biosynthesis of coenzyme Q, also named ubiquinone, an essential lipid-soluble electron transporter for aerobic cellular respiration. This Xenopus laevis (African clawed frog) protein is Ubiquinone biosynthesis protein COQ9-B, mitochondrial (coq9-b).